The following is a 251-amino-acid chain: Hydroxyacylglutathione hydrolase (251 aa).

His-53, His-55, Asp-57, His-58, His-110, Asp-127, and His-165 together coordinate Zn(2+).

This sequence belongs to the metallo-beta-lactamase superfamily. Glyoxalase II family. In terms of assembly, monomer. It depends on Zn(2+) as a cofactor.

It carries out the reaction an S-(2-hydroxyacyl)glutathione + H2O = a 2-hydroxy carboxylate + glutathione + H(+). It functions in the pathway secondary metabolite metabolism; methylglyoxal degradation; (R)-lactate from methylglyoxal: step 2/2. Its function is as follows. Thiolesterase that catalyzes the hydrolysis of S-D-lactoyl-glutathione to form glutathione and D-lactic acid. The polypeptide is Hydroxyacylglutathione hydrolase (Escherichia coli (strain SMS-3-5 / SECEC)).